The chain runs to 578 residues: Cytochrome P450 monooxygenase fsoE (578 aa).

Residues 28-48 (LLMAVAITYAISWINWFFTSW) form a helical membrane-spanning segment. Residue C517 participates in heme binding.

This sequence belongs to the cytochrome P450 family. Heme serves as cofactor.

It is found in the membrane. The enzyme catalyses 3-O-(beta-D-glucopyranosyl)-isomotiol + 2 reduced [NADPH--hemoprotein reductase] + 2 O2 = 2-deacetoxyfuscoatroside + 2 oxidized [NADPH--hemoprotein reductase] + 2 H2O + 3 H(+). It carries out the reaction 3-O-(beta-D-glucopyranosyl)-2alpha-hydroxyisomotiol + 2 reduced [NADPH--hemoprotein reductase] + 2 O2 = 2-deacetylfuscoatroside + 2 oxidized [NADPH--hemoprotein reductase] + 2 H2O + 3 H(+). It catalyses the reaction 3-O-(beta-D-glucopyranosyl)-2alpha-acetoxyisomotiol + 2 reduced [NADPH--hemoprotein reductase] + 2 O2 = fuscoatroside + 2 oxidized [NADPH--hemoprotein reductase] + 2 H2O + 3 H(+). The catalysed reaction is isomotiol + reduced [NADPH--hemoprotein reductase] + O2 = 19beta-hydroxyisomotiol + oxidized [NADPH--hemoprotein reductase] + H2O + H(+). The enzyme catalyses 2alpha-hydroxyisomotiol + reduced [NADPH--hemoprotein reductase] + O2 = 2alpha,19beta-dihydroxyisomotiol + oxidized [NADPH--hemoprotein reductase] + H2O + H(+). It carries out the reaction 2alpha,19beta-dihydroxyisomotiol + reduced [NADPH--hemoprotein reductase] + O2 = 2alpha-hydroxyismotiol-19-one + oxidized [NADPH--hemoprotein reductase] + 2 H2O + H(+). It catalyses the reaction 2alpha-hydroxyismotiol-19-one + 2 reduced [NADPH--hemoprotein reductase] + O2 = 2-deacetyl,3-deglucopyranosyl-fuscoatroside + 2 oxidized [NADPH--hemoprotein reductase] + H2O + 3 H(+). The protein operates within secondary metabolite biosynthesis; terpenoid biosynthesis. Its function is as follows. Cytochrome P450 monooxygenase; part of the gene cluster that mediates the biosynthesis of the enfumafungin-type antibiotic, fuscoatroside. Within the pathway, fsoE catalyzes the oxidative cleavage of the c19-C20 bond within the E-ring, resulting in the formation of a carboxyl group and a methyl group. FsoE exhibits preferential substrate selectivity toward glycoside substrates over their aglycones. The fuscoatroside biosynthesis is initiated by the cyclization of 2,3(S)-oxidosqualene through FsoA's terpene cyclase (TC) domain, leading to the formation of the fernane skeleton isomotiol, harboring a fernane triterpene skeleton with a C8-C9 double bond. Subsequently, C2-alpha-hydroxylation mediated by fsoD results in the production of 2-alpha-hydroxy-isomotiol, which is further acetylated by fsoF. The glycosyltransferase (GT) domain of FsoA may convert isomotiol, 2-alpha-hydroxy-isomotiol, and the acetylated derivative of 2-alpha-hydroxy-isomotiol into their corresponding glycosides 3-O-(beta-D-glucopyranosyl)-isomotiol, 3-O-(beta-D-glucopyranosyl)-2-alpha-hydroxy-isomotiol, and 3-O-(beta-D-glucopyranosyl)-2-alpha-acetoxy-isomotiol, which then undergo oxidative cleavage under the action of fsoE to form s 2-deacetoxy-fuscoatroside, 2-deacetyl-fuscoatroside, and fuscoatroside, respectively. Although hydroxylation followed by acetylation of 3-O-(beta-D-glucopyranosyl)-isomotiol and 2-deacetoxy-fuscoatroside by fsoD and fsoF could not be ruled out, this process is likely to occur with difficulty due to bulky steric hindrance caused by the presence of a glycan at C3 in these compounds. Interestingly, fsoE can also utilize the aglycones isomotiol and 2-alpha-hydroxy-isomotiol as substrates to generate 19-beta-hydroxy-isomotiol and 2-alpha,19-beta-dihydroxy-isomotiol, respectively. These reactions occur with lower efficiency. Finally, fsoE can further convert 2-alpha,19-beta-dihydroxy-isomotiol into 2-alpha-hydroxy-ismotiol-19-one and 2-alpha-hydroxy-ismotiol-19-one into 2-deacetyl-3-deglucopyranosyl-fuscoatroside. The chain is Cytochrome P450 monooxygenase fsoE from Humicola fuscoatra.